A 1024-amino-acid polypeptide reads, in one-letter code: RNA cytidine acetyltransferase (1024 aa).

287 to 296 (GRGKSAALGL) is a binding site for ATP. An N6-acetyllysine modification is found at K426. R470 provides a ligand contact to ATP. In terms of domain architecture, N-acetyltransferase spans 558–753 (CLLPPVPPTQ…HSCIMLKTLA (196 aa)). Acetyl-CoA contacts are provided by residues 629–631 (IAV) and 636–642 (QGMGYGS). Positions 702–1024 (PAERLDYLGV…RKDMKLKRKK (323 aa)) are required for localization to the nucleolus and midbody. Position 716 is a phosphothreonine (T716). R725 is an acetyl-CoA binding site. Residues S934, S984, and S987 each carry the phosphoserine modification. Positions 990–1024 (SDKKRKLETKQEPKQSKKLKKRDNNRKDMKLKRKK) are disordered. Positions 1005–1024 (SKKLKKRDNNRKDMKLKRKK) are enriched in basic residues.

This sequence belongs to the RNA cytidine acetyltransferase family. NAT10 subfamily. In terms of assembly, part of the small subunit (SSU) processome, composed of more than 70 proteins and the RNA chaperone small nucleolar RNA (snoRNA) U3. Interacts with THUMPD1. Interacts with SUN1 (via N-terminus). Interacts with TERT.

The protein resides in the nucleus. The protein localises to the nucleolus. The enzyme catalyses a cytidine in 18S rRNA + acetyl-CoA + ATP + H2O = an N(4)-acetylcytidine in 18S rRNA + ADP + phosphate + CoA + H(+). It carries out the reaction a cytidine in tRNA + acetyl-CoA + ATP + H2O = an N(4)-acetylcytidine in tRNA + ADP + phosphate + CoA + H(+). It catalyses the reaction a cytidine in mRNA + acetyl-CoA + ATP + H2O = an N(4)-acetylcytidine in mRNA + ADP + phosphate + CoA + H(+). In terms of biological role, RNA cytidine acetyltransferase that catalyzes the formation of N(4)-acetylcytidine (ac4C) modification on mRNAs, 18S rRNA and tRNAs. Catalyzes ac4C modification of a broad range of mRNAs, enhancing mRNA stability and translation. mRNA ac4C modification is frequently present within wobble cytidine sites and promotes translation efficiency. Mediates the formation of ac4C at position 1842 in 18S rRNA. May also catalyze the formation of ac4C at position 1337 in 18S rRNA. Required for early nucleolar cleavages of precursor rRNA at sites A0, A1 and A2 during 18S rRNA synthesis. Catalyzes the formation of ac4C in serine and leucine tRNAs. Requires the tRNA-binding adapter protein THUMPD1 for full tRNA acetyltransferase activity but not for 18S rRNA acetylation. In addition to RNA acetyltransferase activity, also able to acetylate lysine residues of proteins, such as histones, microtubules, p53/TP53 and MDM2, in vitro. The relevance of the protein lysine acetyltransferase activity is however unsure in vivo. Activates telomerase activity by stimulating the transcription of TERT, and may also regulate telomerase function by affecting the balance of telomerase subunit assembly, disassembly, and localization. Involved in the regulation of centrosome duplication by acetylating CENATAC during mitosis, promoting SASS6 proteasome degradation. Part of the small subunit (SSU) processome, first precursor of the small eukaryotic ribosomal subunit. During the assembly of the SSU processome in the nucleolus, many ribosome biogenesis factors, an RNA chaperone and ribosomal proteins associate with the nascent pre-rRNA and work in concert to generate RNA folding, modifications, rearrangements and cleavage as well as targeted degradation of pre-ribosomal RNA by the RNA exosome. This is RNA cytidine acetyltransferase from Mus musculus (Mouse).